The chain runs to 54 residues: Large ribosomal subunit protein bL32 (54 aa).

This sequence belongs to the bacterial ribosomal protein bL32 family.

This chain is Large ribosomal subunit protein bL32, found in Buchnera aphidicola subsp. Baizongia pistaciae (strain Bp).